A 190-amino-acid polypeptide reads, in one-letter code: Threonylcarbamoyl-AMP synthase (190 aa).

Residues 7–190 (ADAISFIVDV…ALTGELFRQG (184 aa)) form the YrdC-like domain.

The protein belongs to the SUA5 family. TsaC subfamily.

The protein resides in the cytoplasm. It catalyses the reaction L-threonine + hydrogencarbonate + ATP = L-threonylcarbamoyladenylate + diphosphate + H2O. Its function is as follows. Required for the formation of a threonylcarbamoyl group on adenosine at position 37 (t(6)A37) in tRNAs that read codons beginning with adenine. Catalyzes the conversion of L-threonine, HCO(3)(-)/CO(2) and ATP to give threonylcarbamoyl-AMP (TC-AMP) as the acyladenylate intermediate, with the release of diphosphate. The sequence is that of Threonylcarbamoyl-AMP synthase from Cronobacter sakazakii (strain ATCC BAA-894) (Enterobacter sakazakii).